A 904-amino-acid polypeptide reads, in one-letter code: Protein abrupt (904 aa).

Polar residues predominate over residues 1 to 15 (MTESTQLQTAENNNA). 2 disordered regions span residues 1–30 (MTES…TSSV) and 53–72 (GSAL…HQQQ). The 66-residue stretch at 103 to 168 (VDVTLACDER…MYNGEVNVSH (66 aa)) folds into the BTB domain. The segment covering 204–238 (SHNSSNNNNNNSSSNNSLSNNNNNNNNNAESSNHN) has biased composition (low complexity). Disordered regions lie at residues 204–287 (SHNS…LNSP), 349–390 (ASSA…PPPQ), 411–438 (LLDR…KDRE), and 451–501 (ALEN…NQRS). Residues 239–253 (KISSYLSPNQTSAAC) show a composition bias toward polar residues. A compositionally biased stretch (low complexity) spans 254 to 286 (NNSSNSNSNNHSSSHNNSSSNNISGSLNSSLNS). Over residues 429-438 (SGRDTSKDRE) the composition is skewed to basic and acidic residues. Over residues 452 to 461 (LENSNGQQAN) the composition is skewed to polar residues. S474 is subject to Phosphoserine. A compositionally biased stretch (basic and acidic residues) spans 481 to 500 (PSDRGDGQHDGTLDGIDNQR). C2H2-type zinc fingers lie at residues 544 to 567 (RPCP…EDKH) and 573 to 596 (YRCV…SRQH). 2 disordered regions span residues 633–696 (ELRA…GGSS) and 832–904 (AAGN…VHNT). Over residues 642 to 655 (GGSGSSGGGGGGGS) the composition is skewed to gly residues. The span at 671–682 (DDAEDSDDDPED) shows a compositional bias: acidic residues. Phosphoserine is present on residues S837, S846, and S868. Basic and acidic residues predominate over residues 851 to 868 (MGHDEMAENDGDMRREGS). Over residues 876-886 (DNNQSGSNHEV) the composition is skewed to polar residues. 2 positions are modified to phosphoserine: S889 and S896.

As to expression, expressed in CNS midline cells during embryonic stages 9-13. Expression also seen in cells of the stomagastric nervous system. Segmentally repeated stripes of ectodermal expression appear at stage 11 that become uniform by stage 12 and throughout embryogenesis. Expressed at variable levels in somatic muscles from stage 16 and in all imaginal disks during larval development. Expression is seen in da neurons that grow in two-dimensional dendrites underneath the epidermis during late embryonic, larval, and pupal stages.

It localises to the nucleus. Functionally, expression is vital for development; may be involved in transcriptional regulation. In embryos, muscle specific expression is required for segmental nerve b (SNb) motoneuron target recognition within ventral longitudinal muscles. Has a role in establishing and maintaining embryonic muscle attachments, adult sensory cell formation (macrochaetae) and morphogenesis of adult appendages (legs, antenna aristae and male external genitalia). Has a role in the morphogenesis of the class I dendritic neurons: selective expression of ab in class I da neurons plays a pivotal role in forming dendritic arbors, which are characteristic of the class I cells. The development of more complex arbors of class II-IV neurons depends on the absence of ab. In Drosophila melanogaster (Fruit fly), this protein is Protein abrupt (ab).